The sequence spans 609 residues: Phosphoenolpyruvate carboxykinase [GTP] (609 aa).

Substrate contacts are provided by residues arginine 81 and 220 to 222; that span reads YGG. Mn(2+) contacts are provided by lysine 229 and histidine 249. Position 271 (serine 271) interacts with substrate. 272 to 277 serves as a coordination point for GTP; it reads ACGKTN. Cysteine 273 is a catalytic residue. Position 296 (aspartate 296) interacts with Mn(2+). 387–389 contacts substrate; that stretch reads NSR. Residues arginine 389, arginine 420, and 515 to 518 contribute to the GTP site; that span reads FGEN.

This sequence belongs to the phosphoenolpyruvate carboxykinase [GTP] family. In terms of assembly, monomer. Mn(2+) serves as cofactor.

The protein localises to the cytoplasm. It catalyses the reaction oxaloacetate + GTP = phosphoenolpyruvate + GDP + CO2. It functions in the pathway carbohydrate biosynthesis; gluconeogenesis. Catalyzes the conversion of oxaloacetate (OAA) to phosphoenolpyruvate (PEP), the rate-limiting step in the metabolic pathway that produces glucose from lactate and other precursors derived from the citric acid cycle. In Mycobacterium leprae (strain Br4923), this protein is Phosphoenolpyruvate carboxykinase [GTP].